The following is a 769-amino-acid chain: Gephyrin (769 aa).

The tract at residues 14 to 153 is MPT Mo-transferase; that stretch reads QIRVGVLTVS…LPGSKKGSQE (140 aa). An interaction with GABARAP region spans residues 140 to 349; it reads LIINLPGSKK…VDITKVARRH (210 aa). Disordered stretches follow at residues 181-232 and 260-299; these read DELE…DSSS and TASL…SKGV. Pro residues predominate over residues 187–199; it reads PSPPPPLSPPPTT. Serine 188 and serine 194 each carry phosphoserine. At threonine 198 the chain carries Phosphothreonine. Serine 200 carries the phosphoserine modification. The S-palmitoyl cysteine moiety is linked to residue cysteine 212. The span at 261-286 shows a compositional bias: polar residues; the sequence is ASLSTTPSESPRAQATSRLSTASCPT. A Phosphoserine modification is found at serine 262. Residues threonine 265 and threonine 266 each carry the phosphothreonine modification. A phosphoserine mark is found at serine 268 and serine 270. Residue cysteine 284 is the site of S-palmitoyl cysteine attachment. The MPT adenylyltransferase stretch occupies residues 327–769; that stretch reads SSKENILRAS…VVDVMVIGRL (443 aa). Position 338 is a phosphoserine (serine 338).

The protein in the N-terminal section; belongs to the MoaB/Mog family. In the C-terminal section; belongs to the MoeA family. Homotrimer, homodimer and homooligomer. Interacts with SRGAP2 (via SH3 domain). Interacts with GLRB. Interacts with GABARAP. Interacts with GABRA3. GABRA3 and GLRB occupy overlapping binding sites. Interacts with ARHGAP32; IQSEC3, INSYN1 and INSYN2A. The cofactor is Mg(2+). Post-translationally, palmitoylated. Palmitoylation is stimulated by GABA type A receptors activity. Palmitoylation by ZDHHC12 regulates clustering at synapses.

It localises to the postsynaptic cell membrane. The protein resides in the cell membrane. The protein localises to the cytoplasm. Its subcellular location is the cytosol. It is found in the cytoskeleton. It localises to the cell projection. The protein resides in the dendrite. The protein localises to the postsynaptic density. The enzyme catalyses molybdopterin + ATP + H(+) = adenylyl-molybdopterin + diphosphate. The catalysed reaction is adenylyl-molybdopterin + molybdate = Mo-molybdopterin + AMP + H(+). It participates in cofactor biosynthesis; molybdopterin biosynthesis. Its activity is regulated as follows. Inhibited by copper and tungsten. Functionally, microtubule-associated protein involved in membrane protein-cytoskeleton interactions. It is thought to anchor the inhibitory glycine receptor (GLYR) to subsynaptic microtubules. Acts as a major instructive molecule at inhibitory synapses, where it also clusters GABA type A receptors. In terms of biological role, also has a catalytic activity and catalyzes two steps in the biosynthesis of the molybdenum cofactor. In the first step, molybdopterin is adenylated. Subsequently, molybdate is inserted into adenylated molybdopterin and AMP is released. The polypeptide is Gephyrin (Gphn) (Mus musculus (Mouse)).